Reading from the N-terminus, the 395-residue chain is Aurora kinase A (395 aa).

Positions 1–114 (MDRCKENCVS…QASLQKTEDT (114 aa)) are disordered. 2 stretches are compositionally biased toward polar residues: residues 29 to 60 (QIPSQNLGSASSGQAQRVLCPSNSQRVPSQAQ) and 84 to 99 (RLNNPQKNEQPAASGN). Phosphoserine occurs at positions 40 and 50. A compositionally biased stretch (basic and acidic residues) spans 100 to 114 (DSEKEQASLQKTEDT). One can recognise a Protein kinase domain in the interval 124-374 (FDIGRPLGKG…LAEVLEHPWI (251 aa)). ATP is bound by residues lysine 134, lysine 153, and 201 to 204 (LEYA). The active-site Proton acceptor is aspartate 247. Lysine 249 is covalently cross-linked (Glycyl lysine isopeptide (Lys-Gly) (interchain with G-Cter in SUMO2)). Residues 251-252 (EN) and aspartate 265 contribute to the ATP site. The tract at residues 271–284 (HAPSSRRTTMCGTL) is activation segment. Phosphothreonine occurs at positions 278 and 279. Serine 333 is subject to Phosphoserine; by PKA and PAK. Positions 376–385 (ANSSKPPTGH) are enriched in polar residues. The interval 376 to 395 (ANSSKPPTGHTSKEPTSKSS) is disordered. Residues 386 to 395 (TSKEPTSKSS) show a composition bias toward basic and acidic residues.

This sequence belongs to the protein kinase superfamily. Ser/Thr protein kinase family. Aurora subfamily. As to quaternary structure, part of a complex composed of NEDD9, AURKA and CTTN; within the complex NEDD9 acts as a scaffold protein and is required for complex formation. Identified in a complex with AUNIP and NIN. Interacts with CPEB1, JTB, TACC1, TPX2, PPP2CA, as well as with the protein phosphatase type 1 (PP1) isoforms PPP1CA, PPP1CB and PPP1CC. Also interacts with its substrates ARHGEF2, BORA, KIF2A, PARD3, and p53/TP53. Interaction with BORA promotes phosphorylation of PLK1. Interacts with GADD45A, competing with its oligomerization. Interacts with FBXL7 and CIMAP3. Interacts (via C-terminus) with AUNIP (via C-terminus). Interacts with SIRT2. Interacts with FRY; this interaction facilitates AURKA-mediated PLK1 phosphorylation. Interacts with MYCN; interaction is phospho-independent and triggers AURKA activation; AURKA competes with FBXW7 for binding to unphosphorylated MYCN but not for binding to phosphorylated MYCN. Interacts with HNRNPU. Interacts with AAAS. Interacts with KLHL18 and CUL3. Interacts with FOXP1. Interacts with HDAC6; AURKA-mediated phosphorylation of HDAC6 promotes deacetylation of alpha-tubulin. Post-translationally, activated by phosphorylation at Thr-279; this brings about a change in the conformation of the activation segment. Phosphorylation at Thr-279 varies during the cell cycle and is highest during M phase. Autophosphorylated at Thr-279 upon TPX2 binding. Thr-279 can be phosphorylated by several kinases, including PAK and PKA. Protein phosphatase type 1 (PP1) binds AURKA and inhibits its activity by dephosphorylating Thr-279 during mitosis. Phosphorylation at Ser-333 decreases the kinase activity. PPP2CA controls degradation by dephosphorylating Ser-52 at the end of mitosis. Ubiquitinated by the anaphase-promoting complex (APC), leading to its degradation by the proteasome. Ubiquitinated by CHFR, leading to its degradation by the proteasome. Ubiquitinated by the E3 ubiquitin-protein ligase complex SCF(FBXL7) during mitosis, leading to its degradation by the proteasome. As to expression, detected in embryonic neurons in dorsal root ganglia and brain cortex (at protein level). Highly expressed in testis, in about one third of the seminiferous tubules. Expression is restricted to specific spermatocytes nearing completion of prophase, with levels falling off on transition to elongated spermatids. Highly expressed in the ovary, expression in the oocyte starts around the transition to large growing follicle. Abundant expression is seen in the proliferating granulosa and thecal cells of the growing follicle, and in the young corpus luteum. Very weakly expressed in spleen and intestine.

It localises to the cytoplasm. The protein resides in the cytoskeleton. Its subcellular location is the microtubule organizing center. The protein localises to the centrosome. It is found in the spindle pole. It localises to the centriole. The protein resides in the cell projection. Its subcellular location is the neuron projection. The protein localises to the cilium. It is found in the cilium basal body. It localises to the basolateral cell membrane. It carries out the reaction L-seryl-[protein] + ATP = O-phospho-L-seryl-[protein] + ADP + H(+). It catalyses the reaction L-threonyl-[protein] + ATP = O-phospho-L-threonyl-[protein] + ADP + H(+). Its activity is regulated as follows. Activation of CDK1, appears to be an upstream event of AURKA activation. Phosphatase inhibitor-2 (PPP1R2) and TPX2 act also as activators. Inactivated by the G2 checkpoint. Inhibited by GADD45A and p53/TP53, and through dephosphorylation by protein phosphatase type 1 (PP1). MLN8054 is also a potent and selective inhibitor. Activated during the early phase of cilia disassembly in the presence of CIMAP3. Inhibited by the small molecule inhibitor VX-680. In terms of biological role, mitotic serine/threonine kinase that contributes to the regulation of cell cycle progression. Associates with the centrosome and the spindle microtubules during mitosis and plays a critical role in various mitotic events including the establishment of mitotic spindle, centrosome duplication, centrosome separation as well as maturation, chromosomal alignment, spindle assembly checkpoint, and cytokinesis. Required for normal spindle positioning during mitosis and for the localization of NUMA1 and DCTN1 to the cell cortex during metaphase. Required for initial activation of CDK1 at centrosomes. Phosphorylates numerous target proteins, including ARHGEF2, BORA, BRCA1, CDC25B, DLGP5, HDAC6, KIF2A, LATS2, NDEL1, PARD3, PPP1R2, PLK1, RASSF1, TACC3, p53/TP53 and TPX2. Phosphorylates MCRS1 which is required for MCRS1-mediated kinetochore fiber assembly and mitotic progression. Regulates KIF2A tubulin depolymerase activity. Required for normal axon formation. Plays a role in microtubule remodeling during neurite extension. Important for microtubule formation and/or stabilization. Also acts as a key regulatory component of the p53/TP53 pathway, and particularly the checkpoint-response pathways critical for oncogenic transformation of cells, by phosphorylating and destabilizing p53/TP53. Phosphorylates its own inhibitors, the protein phosphatase type 1 (PP1) isoforms, to inhibit their activity. Inhibits cilia outgrowth. Required for cilia disassembly via phosphorylation of HDAC6 and subsequent deacetylation of alpha-tubulin. Regulates protein levels of the anti-apoptosis protein BIRC5 by suppressing the expression of the SCF(FBXL7) E3 ubiquitin-protein ligase substrate adapter FBXL7 through the phosphorylation of the transcription factor FOXP1. This is Aurora kinase A (Aurka) from Mus musculus (Mouse).